Reading from the N-terminus, the 262-residue chain is Hydroxyethylthiazole kinase (262 aa).

Residue Met-50 coordinates substrate. The ATP site is built by Arg-125 and Thr-171. Gly-198 serves as a coordination point for substrate.

Belongs to the Thz kinase family. Requires Mg(2+) as cofactor.

It carries out the reaction 5-(2-hydroxyethyl)-4-methylthiazole + ATP = 4-methyl-5-(2-phosphooxyethyl)-thiazole + ADP + H(+). It participates in cofactor biosynthesis; thiamine diphosphate biosynthesis; 4-methyl-5-(2-phosphoethyl)-thiazole from 5-(2-hydroxyethyl)-4-methylthiazole: step 1/1. Catalyzes the phosphorylation of the hydroxyl group of 4-methyl-5-beta-hydroxyethylthiazole (THZ). The polypeptide is Hydroxyethylthiazole kinase (Escherichia coli (strain SMS-3-5 / SECEC)).